Consider the following 235-residue polypeptide: Large ribosomal subunit protein uL1 (235 aa).

It belongs to the universal ribosomal protein uL1 family. In terms of assembly, part of the 50S ribosomal subunit.

Its function is as follows. Binds directly to 23S rRNA. The L1 stalk is quite mobile in the ribosome, and is involved in E site tRNA release. Protein L1 is also a translational repressor protein, it controls the translation of the L11 operon by binding to its mRNA. This chain is Large ribosomal subunit protein uL1, found in Renibacterium salmoninarum (strain ATCC 33209 / DSM 20767 / JCM 11484 / NBRC 15589 / NCIMB 2235).